The following is a 258-amino-acid chain: Ribosomal RNA small subunit methyltransferase J (258 aa).

Residues 111–112 (RD), 127–128 (ER), and Asp179 contribute to the S-adenosyl-L-methionine site.

This sequence belongs to the methyltransferase superfamily. RsmJ family.

It localises to the cytoplasm. The catalysed reaction is guanosine(1516) in 16S rRNA + S-adenosyl-L-methionine = N(2)-methylguanosine(1516) in 16S rRNA + S-adenosyl-L-homocysteine + H(+). Functionally, specifically methylates the guanosine in position 1516 of 16S rRNA. The chain is Ribosomal RNA small subunit methyltransferase J from Alteromonas mediterranea (strain DSM 17117 / CIP 110805 / LMG 28347 / Deep ecotype).